Consider the following 778-residue polypeptide: Protein translocase subunit SecA 2 (778 aa).

ATP is bound by residues Gln94, Gly112–Thr116, and Asp501.

It belongs to the SecA family. In terms of assembly, monomer and homodimer. Part of the essential Sec protein translocation apparatus which comprises SecA, SecYEG and auxiliary proteins SecDF. Other proteins may also be involved.

It is found in the cell membrane. The protein resides in the cytoplasm. It catalyses the reaction ATP + H2O + cellular proteinSide 1 = ADP + phosphate + cellular proteinSide 2.. In terms of biological role, part of the Sec protein translocase complex. Interacts with the SecYEG preprotein conducting channel. Has a central role in coupling the hydrolysis of ATP to the transfer of proteins into and across the cell membrane, serving as an ATP-driven molecular motor driving the stepwise translocation of polypeptide chains across the membrane. The chain is Protein translocase subunit SecA 2 from Mycobacterium leprae (strain TN).